The sequence spans 529 residues: Low affinity inorganic phosphate transporter 4 (529 aa).

Over 1–21 (MASDNLVVLNALDTARTQWYH) the chain is Cytoplasmic. A helical transmembrane segment spans residues 22–42 (VTAVIIAGMGFFTDAYDLFCI). At 43-71 (STVSKLLGRLYYYDPSTKAPGKLPHMANN) the chain is on the extracellular side. Residues 72-92 (WVIGVALVGTLSGQLVFGWLG) form a helical membrane-spanning segment. The Cytoplasmic portion of the chain corresponds to 93 to 99 (DKLGRKK). A helical transmembrane segment spans residues 100-120 (VYGLTLILMVICALCSGLSLG). At 121–125 (YSPKS) the chain is on the extracellular side. A helical membrane pass occupies residues 126-146 (VIGTLCFFRFWLGFGIGGDYP). Topologically, residues 147–161 (LSATIMSEYANKSTR) are cytoplasmic. A helical transmembrane segment spans residues 162 to 182 (GAFIAAVFAMQGVGIIFAGLV). The Extracellular segment spans residues 183-211 (SMTISKVFLMNFEGKPFNVDEVLSTEPEA). A helical transmembrane segment spans residues 212 to 232 (DYVWRIVLMLGALPALLTYYW). Residues 233 to 291 (RMKMPETGRYTAIIEGNAKQAAIDMGKVLDIEIQAEGDKLAQFKAANEYSLLSNEFFQR) are Cytoplasmic-facing. The helical transmembrane segment at 292-312 (HGLHLIGTMSTWFLLDIAFYS) threads the bilayer. The Extracellular segment spans residues 313–344 (QNLTQKDIFPVMGLTSKANTISALREMFETSR). N314 carries N-linked (GlcNAc...) asparagine glycosylation. The helical transmembrane segment at 345-365 (AMFVIALFGTFPGYWFTVFFI) threads the bilayer. Topologically, residues 366–374 (EKIGRFKIQ) are cytoplasmic. The chain crosses the membrane as a helical span at residues 375–395 (LVGFFMMSVFMAIIGVKYDYL). The Extracellular segment spans residues 396-405 (RNKEHKWTFA). Residues 406 to 426 (ALYGLTFFFANFGPNSTTFVL) form a helical membrane-spanning segment. The Cytoplasmic portion of the chain corresponds to 427–437 (PAELFPTRVRS). The chain crosses the membrane as a helical span at residues 438–458 (TCHALSAALGKAGAMISAFGI). The Extracellular portion of the chain corresponds to 459 to 471 (QQYTQDQDVRKIK). The chain crosses the membrane as a helical span at residues 472 to 492 (TAMLLLAFTNMVGFCCTFLVT). Residues 493-529 (ETKGRSLEEISGEDGRQNETQMKTTRPVSGHPDDGWE) are Cytoplasmic-facing. A disordered region spans residues 501–529 (EISGEDGRQNETQMKTTRPVSGHPDDGWE). Polar residues predominate over residues 510–519 (NETQMKTTRP).

Belongs to the major facilitator superfamily. Phosphate:H(+) symporter (TC 2.A.1.9) family.

Its subcellular location is the cell membrane. The enzyme catalyses phosphate(in) + H(+)(in) = phosphate(out) + H(+)(out). Functionally, low-affinity transporter for external inorganic phosphate (Pi) probably involved in the acquisition of phosphate released by arbuscular mycorrhizal (AM) fungi (e.g. Rhizophagus irregularis and Glomus intraradices) during AM symbiosis. Acts as a Pi-sensing machinery at the root tip level, independently of AM fungi, involved in the regulation of early root branching and lateral roots formation. This chain is Low affinity inorganic phosphate transporter 4, found in Petunia hybrida (Petunia).